The sequence spans 217 residues: Small ribosomal subunit protein uS3 (217 aa).

In terms of domain architecture, KH type-2 spans 38–106 (IRKFVQKELA…QVHINIIEIK (69 aa)).

It belongs to the universal ribosomal protein uS3 family. As to quaternary structure, part of the 30S ribosomal subunit. Forms a tight complex with proteins S10 and S14.

Functionally, binds the lower part of the 30S subunit head. Binds mRNA in the 70S ribosome, positioning it for translation. This chain is Small ribosomal subunit protein uS3, found in Streptococcus pneumoniae serotype 19F (strain G54).